Reading from the N-terminus, the 202-residue chain is dTTP/UTP pyrophosphatase (202 aa).

Asp71 acts as the Proton acceptor in catalysis.

It belongs to the Maf family. YhdE subfamily. A divalent metal cation is required as a cofactor.

It localises to the cytoplasm. The enzyme catalyses dTTP + H2O = dTMP + diphosphate + H(+). It carries out the reaction UTP + H2O = UMP + diphosphate + H(+). In terms of biological role, nucleoside triphosphate pyrophosphatase that hydrolyzes dTTP and UTP. May have a dual role in cell division arrest and in preventing the incorporation of modified nucleotides into cellular nucleic acids. The chain is dTTP/UTP pyrophosphatase from Zymomonas mobilis subsp. mobilis (strain ATCC 31821 / ZM4 / CP4).